The following is a 67-amino-acid chain: DNA-directed RNA polymerase subunit omega (67 aa).

The protein belongs to the RNA polymerase subunit omega family. As to quaternary structure, the RNAP catalytic core consists of 2 alpha, 1 beta, 1 beta' and 1 omega subunit. When a sigma factor is associated with the core the holoenzyme is formed, which can initiate transcription.

It catalyses the reaction RNA(n) + a ribonucleoside 5'-triphosphate = RNA(n+1) + diphosphate. In terms of biological role, promotes RNA polymerase assembly. Latches the N- and C-terminal regions of the beta' subunit thereby facilitating its interaction with the beta and alpha subunits. This Bacillus velezensis (strain DSM 23117 / BGSC 10A6 / LMG 26770 / FZB42) (Bacillus amyloliquefaciens subsp. plantarum) protein is DNA-directed RNA polymerase subunit omega.